The sequence spans 94 residues: Lipoate-protein ligase A subunit 2 (94 aa).

Heterodimer composed of LplA and LplB.

The enzyme catalyses L-lysyl-[lipoyl-carrier protein] + (R)-lipoate + ATP = N(6)-[(R)-lipoyl]-L-lysyl-[lipoyl-carrier protein] + AMP + diphosphate + H(+). It participates in protein modification; protein lipoylation via exogenous pathway; protein N(6)-(lipoyl)lysine from lipoate: step 1/2. Its pathway is protein modification; protein lipoylation via exogenous pathway; protein N(6)-(lipoyl)lysine from lipoate: step 2/2. Part of a lipoate-protein ligase complex that catalyzes both the ATP-dependent activation of exogenously supplied lipoate to lipoyl-AMP and the transfer of the activated lipoyl onto the lipoyl domains of lipoate-dependent enzymes. Can also use octanoate as substrate. This chain is Lipoate-protein ligase A subunit 2 (lplB), found in Thermoplasma acidophilum (strain ATCC 25905 / DSM 1728 / JCM 9062 / NBRC 15155 / AMRC-C165).